Consider the following 550-residue polypeptide: Eukaryotic translation initiation factor 3 subunit D-2 (550 aa).

Residues 97–126 (RGRGFRPSVHNNPRNVRNQRGRKGNAMGNI) form a disordered region. Residues 287–301 (KFDMLTVNETSQEPP) are RNA gate. Positions 530-550 (SDVSEEEESSEDKPFGLSMNN) are disordered.

Belongs to the eIF-3 subunit D family. As to quaternary structure, component of the eukaryotic translation initiation factor 3 (eIF-3) complex. The eIF-3 complex interacts with pix.

Its subcellular location is the cytoplasm. MRNA cap-binding component of the eukaryotic translation initiation factor 3 (eIF-3) complex, which is involved in protein synthesis of a specialized repertoire of mRNAs and, together with other initiation factors, stimulates binding of mRNA and methionyl-tRNAi to the 40S ribosome. The eIF-3 complex specifically targets and initiates translation of a subset of mRNAs involved in cell proliferation. In the eIF-3 complex, eif3d specifically recognizes and binds the 7-methylguanosine cap of a subset of mRNAs. The sequence is that of Eukaryotic translation initiation factor 3 subunit D-2 from Drosophila willistoni (Fruit fly).